We begin with the raw amino-acid sequence, 89 residues long: Small ribosomal subunit protein uS15 (89 aa).

The protein belongs to the universal ribosomal protein uS15 family. As to quaternary structure, part of the 30S ribosomal subunit. Forms a bridge to the 50S subunit in the 70S ribosome, contacting the 23S rRNA.

Functionally, one of the primary rRNA binding proteins, it binds directly to 16S rRNA where it helps nucleate assembly of the platform of the 30S subunit by binding and bridging several RNA helices of the 16S rRNA. In terms of biological role, forms an intersubunit bridge (bridge B4) with the 23S rRNA of the 50S subunit in the ribosome. This is Small ribosomal subunit protein uS15 from Cupriavidus pinatubonensis (strain JMP 134 / LMG 1197) (Cupriavidus necator (strain JMP 134)).